We begin with the raw amino-acid sequence, 283 residues long: CDP-abequose synthase (283 aa).

NAD(+)-binding positions include 7–13, 48–49, Tyr-129, and Lys-133; these read GGSGYIG and EF. The active-site Proton acceptor is Tyr-129.

It belongs to the NAD(P)-dependent epimerase/dehydratase family.

The catalysed reaction is CDP-alpha-D-abequose + NADP(+) = CDP-4-dehydro-3,6-dideoxy-alpha-D-glucose + NADPH + H(+). It participates in bacterial outer membrane biogenesis; LPS O-antigen biosynthesis. Functionally, the CDP-abequose synthase is involved in lipopolysaccharides (LPS) synthesis containing abequose which are important antigens of the cell surface responsible for the serological O specificity. Derivatives of the 3,6-dideoxyhexose group have a particular highly immunogenic character. The sequence is that of CDP-abequose synthase (rfbJ) from Yersinia pseudotuberculosis.